We begin with the raw amino-acid sequence, 101 residues long: Small ribosomal subunit protein uS14 (101 aa).

It belongs to the universal ribosomal protein uS14 family. Part of the 30S ribosomal subunit. Contacts proteins S3 and S10.

Its function is as follows. Binds 16S rRNA, required for the assembly of 30S particles and may also be responsible for determining the conformation of the 16S rRNA at the A site. This chain is Small ribosomal subunit protein uS14, found in Rhizorhabdus wittichii (strain DSM 6014 / CCUG 31198 / JCM 15750 / NBRC 105917 / EY 4224 / RW1) (Sphingomonas wittichii).